We begin with the raw amino-acid sequence, 178 residues long: uncharacterized protein (178 aa).

Disordered stretches follow at residues 89–115 (NEEQ…RLSI) and 136–178 (DMPT…EIKA). Over residues 98 to 109 (ASHGSTSSATST) the composition is skewed to low complexity. The span at 167-178 (DSDEEEEEEIKA) shows a compositional bias: acidic residues.

Its subcellular location is the cytoplasm. The protein resides in the nucleus. This is an uncharacterized protein from Schizosaccharomyces pombe (strain 972 / ATCC 24843) (Fission yeast).